Consider the following 2190-residue polypeptide: Highly-reducing polyketide synthase 1 (2190 aa).

The region spanning 6–431 is the Ketosynthase family 3 (KS3) domain; sequence LTPVAIVGYA…GANAHVVLGA (426 aa). Catalysis depends on for beta-ketoacyl synthase activity residues Cys179, His315, and His355. The region spanning 541–857 is the Malonyl-CoA:ACP transacylase (MAT) domain; the sequence is FVFTGQGAQW…VSVLARGQNA (317 aa). Residues 925 to 1061 form an N-terminal hotdog fold region; sequence NDLLGSLADW…GLVGVRNSPA (137 aa). Positions 925 to 1246 constitute a PKS/mFAS DH domain; sequence NDLLGSLADW…MTPLRESSGS (322 aa). His957 functions as the Proton acceptor; for dehydratase activity in the catalytic mechanism. The tract at residues 1089 to 1246 is C-terminal hotdog fold; the sequence is TETVDVQAMY…MTPLRESSGS (158 aa). The Proton donor; for dehydratase activity role is filled by Asp1154. Positions 1494-1804 constitute an Enoyl reductase (ER) domain; that stretch reads GSLDSFYFVD…SGKSMGKLVI (311 aa). One can recognise a Ketoreductase (KR) domain in the interval 1828–2005; the sequence is ASYLIVGGTG…GTSLDLTAVS (178 aa). Positions 2107–2184 constitute a Carrier domain; the sequence is KALEVLYGAL…ELAKLISKKS (78 aa). Ser2144 carries the O-(pantetheine 4'-phosphoryl)serine modification.

Pantetheine 4'-phosphate serves as cofactor.

Its function is as follows. Highly-reducing polyketide synthase; part of the gene cluster that mediates the biosynthesis of liamocins, glycolipids (also called heavy oils) composed of a single mannitol or arabitol headgroup linked to either three, four or even six 3,5-dihydroxydecanoic ester tail-groups. Within the pathway, PKS1 is responsible for biosynthesis of 3,5-dihydroxydecanoic acid from acetyl-CoA and malonyl-CoA. A phosphopantetheine transferase (PPTase) activates the HR-PKS. The esterase EST1 then catalyzes ester bond formation between 3,5-dihydroxydecanoic acid and mannitol (provided by the mannitol-1-phosphate 5-dehydrogenase and the NADP-dependent mannitol dehydrogenase) or arabinol (provided by the L-arabinitol 4-dehydrogenase). This chain is Highly-reducing polyketide synthase 1, found in Aureobasidium melanogenum (Aureobasidium pullulans var. melanogenum).